Reading from the N-terminus, the 34-residue chain is Protamine-Y1/Y2 (34 aa).

A disordered region spans residues 1–34; that stretch reads PRRRRQASRPVRRRRRYRRSTAARRRRRVVRRRR.

In terms of tissue distribution, testis.

The protein localises to the nucleus. Its subcellular location is the chromosome. In terms of biological role, protamines substitute for histones in the chromatin of sperm during the haploid phase of spermatogenesis. They compact sperm DNA into a highly condensed, stable and inactive complex. The chain is Protamine-Y1/Y2 from Thunnus thynnus (Atlantic bluefin tuna).